The following is a 341-amino-acid chain: Protein pelota homolog (341 aa).

This sequence belongs to the eukaryotic release factor 1 family. Pelota subfamily. In terms of assembly, monomer. A divalent metal cation is required as a cofactor.

Its subcellular location is the cytoplasm. May function in recognizing stalled ribosomes, interact with stem-loop structures in stalled mRNA molecules, and effect endonucleolytic cleavage of the mRNA. May play a role in the release non-functional ribosomes and degradation of damaged mRNAs. Has endoribonuclease activity. This is Protein pelota homolog from Methanoculleus marisnigri (strain ATCC 35101 / DSM 1498 / JR1).